Here is a 33-residue protein sequence, read N- to C-terminus: Potassium channel toxin alpha-KTx 10.5 (33 aa).

3 cysteine pairs are disulfide-bonded: cysteine 4–cysteine 23, cysteine 9–cysteine 28, and cysteine 13–cysteine 30.

In terms of tissue distribution, expressed by the venom gland.

It is found in the secreted. In terms of biological role, inhibits less than 5% of human voltage-gated potassium (Kv) channel Kv1.3/KCNA3 currents at 100nM concentration and does not block human Kv1.1/KCNA1 and Kv1.2/KCNA2 currents. This Centruroides bonito (Scorpion) protein is Potassium channel toxin alpha-KTx 10.5.